A 226-amino-acid polypeptide reads, in one-letter code: uncharacterized protein (226 aa).

One can recognise an RNase H type-1 domain in the interval 71-207 (EPDDITVYFD…ADGLAKKILS (137 aa)).

This is an uncharacterized protein from Bacillus subtilis (strain 168).